A 106-amino-acid chain; its full sequence is SH3 domain-binding glutamic acid-rich-like protein 2-A (106 aa).

The short motif at 61–67 (QGNPLPP) is the SH3-binding element.

The protein belongs to the SH3BGR family.

The protein localises to the nucleus. The chain is SH3 domain-binding glutamic acid-rich-like protein 2-A (sh3bgrl2-a) from Xenopus laevis (African clawed frog).